We begin with the raw amino-acid sequence, 77 residues long: Conotoxin VnMKLT1-012 (77 aa).

An N-terminal signal peptide occupies residues 1–22; that stretch reads MKLTCMMIVAVLFLTAWTFVTA. The propeptide occupies 23–48; the sequence is DDSRNGLDYLFPKARHEMNPKASRDI. 3 disulfide bridges follow: cysteine 51-cysteine 68, cysteine 58-cysteine 72, and cysteine 67-cysteine 76.

The protein belongs to the conotoxin O1 superfamily. As to expression, expressed by the venom duct.

It localises to the secreted. This chain is Conotoxin VnMKLT1-012, found in Conus ventricosus (Mediterranean cone).